A 187-amino-acid polypeptide reads, in one-letter code: Transmembrane protein 11-A, mitochondrial (187 aa).

Transmembrane regions (helical) follow at residues 79 to 95 and 102 to 119; these read TAVL…LALP and VSLP…LYGI.

It belongs to the TMEM11 family.

It is found in the mitochondrion inner membrane. Plays a role in mitochondrial morphogenesis. This is Transmembrane protein 11-A, mitochondrial (tmem11-a) from Xenopus laevis (African clawed frog).